The following is a 61-amino-acid chain: Small ribosomal subunit protein uS14 (61 aa).

Zn(2+) is bound by residues Cys-24, Cys-27, Cys-40, and Cys-43.

The protein belongs to the universal ribosomal protein uS14 family. Zinc-binding uS14 subfamily. Part of the 30S ribosomal subunit. Contacts proteins S3 and S10. It depends on Zn(2+) as a cofactor.

In terms of biological role, binds 16S rRNA, required for the assembly of 30S particles and may also be responsible for determining the conformation of the 16S rRNA at the A site. This is Small ribosomal subunit protein uS14 from Halalkalibacterium halodurans (strain ATCC BAA-125 / DSM 18197 / FERM 7344 / JCM 9153 / C-125) (Bacillus halodurans).